The primary structure comprises 326 residues: DnaJ homolog subfamily B member 6 (326 aa).

The region spanning 2–69 (VDYYEVLGVQ…KKRDIYDKYG (68 aa)) is the J domain. Residues 2–146 (VDYYEVLGVQ…TGSFFSAFSG (145 aa)) form an interaction with HSP70 region. The segment at 119-242 (FEDFFGNRRG…ADDDALAEER (124 aa)) is interaction with KRT18. Arg-135 bears the Omega-N-methylarginine mark. Residues 249-326 (ALPAQPAGLR…KKKKSTKGNH (78 aa)) are disordered. The residue at position 277 (Ser-277) is a Phosphoserine.

As to quaternary structure, homooligomer. Interacts with BAG3, HSPB8 and STUB1. Interacts with ALKBH1. Interacts with HSP70, KRT18 and PTTG. In terms of assembly, interacts with histone deacetylases HDAC4, HDAC6, and SIRT2, HDAC activity is required for antiaggregation. As to expression, widely expressed. Highest levels in testis and brain, and lower levels in heart, spleen, intestine, ovary, placenta, lung, kidney, pancreas, thymus, prostate, skeletal muscle, liver and leukocytes. In testis, expressed in germ cells in the earlier stages of differentiation pathway as well as in spermatids. In brain, expressed at a higher level in hippocampus and thalamus and a lower level in amygdala, substantia nigra, corpus callosum and caudate nucleus.

The protein localises to the cytoplasm. It localises to the perinuclear region. It is found in the nucleus. Its subcellular location is the myofibril. The protein resides in the sarcomere. The protein localises to the z line. Functionally, has a stimulatory effect on the ATPase activity of HSP70 in a dose-dependent and time-dependent manner and hence acts as a co-chaperone of HSP70. Plays an indispensable role in the organization of KRT8/KRT18 filaments. Acts as an endogenous molecular chaperone for neuronal proteins including huntingtin. Suppresses aggregation and toxicity of polyglutamine-containing, aggregation-prone proteins. Also reduces cellular toxicity and caspase-3 activity. Isoform B but not isoform A inhibits huntingtin aggregation. This Homo sapiens (Human) protein is DnaJ homolog subfamily B member 6 (DNAJB6).